We begin with the raw amino-acid sequence, 131 residues long: Large ribosomal subunit protein bL12 (131 aa).

Belongs to the bacterial ribosomal protein bL12 family. Homodimer. Part of the ribosomal stalk of the 50S ribosomal subunit. Forms a multimeric L10(L12)X complex, where L10 forms an elongated spine to which 2 to 4 L12 dimers bind in a sequential fashion. Binds GTP-bound translation factors.

In terms of biological role, forms part of the ribosomal stalk which helps the ribosome interact with GTP-bound translation factors. Is thus essential for accurate translation. This Prochlorococcus marinus (strain MIT 9301) protein is Large ribosomal subunit protein bL12.